Reading from the N-terminus, the 429-residue chain is Saccharopine dehydrogenase-like oxidoreductase (429 aa).

An N-acetylalanine modification is found at Ala-2. A phosphoserine mark is found at Ser-209, Ser-215, and Ser-217.

The protein belongs to the saccharopine dehydrogenase family.

This chain is Saccharopine dehydrogenase-like oxidoreductase (Sccpdh), found in Mus musculus (Mouse).